The sequence spans 553 residues: Methionine--tRNA ligase (553 aa).

The 'HIGH' region motif lies at 12 to 22 (PYANSQLHLGH). Positions 144, 147, 157, and 160 each coordinate Zn(2+). A 'KMSKS' region motif is present at residues 332-336 (KFSKS). An ATP-binding site is contributed by Lys335.

It belongs to the class-I aminoacyl-tRNA synthetase family. MetG type 1 subfamily. In terms of assembly, monomer. Zn(2+) serves as cofactor.

The protein localises to the cytoplasm. It carries out the reaction tRNA(Met) + L-methionine + ATP = L-methionyl-tRNA(Met) + AMP + diphosphate. In terms of biological role, is required not only for elongation of protein synthesis but also for the initiation of all mRNA translation through initiator tRNA(fMet) aminoacylation. This chain is Methionine--tRNA ligase, found in Dehalococcoides mccartyi (strain ATCC BAA-2266 / KCTC 15142 / 195) (Dehalococcoides ethenogenes (strain 195)).